We begin with the raw amino-acid sequence, 208 residues long: MNVELFKKFSEKVEEIIEAGRILHSRGWVPATSGNISAKVSEEYIAITASGKHKGKLTPEDILLIDYEGRPVGGGKPSAETLLHTTVYKLFPEVNAVVHTHSPNATVISIVEKKDFVELEDYELLKAFPDIHTHEVKIKIPIFPNEQNIPLLAKEVENYFKTSEDKYGFLIRGHGLYTWGRSMEEALIHTEALEFIFECELKLLSFHS.

Residues His99 and His101 each contribute to the Zn(2+) site.

Belongs to the aldolase class II family. MtnB subfamily. The cofactor is Zn(2+).

It carries out the reaction 5-(methylsulfanyl)-D-ribulose 1-phosphate = 5-methylsulfanyl-2,3-dioxopentyl phosphate + H2O. Its pathway is amino-acid biosynthesis; L-methionine biosynthesis via salvage pathway; L-methionine from S-methyl-5-thio-alpha-D-ribose 1-phosphate: step 2/6. Functionally, catalyzes the dehydration of methylthioribulose-1-phosphate (MTRu-1-P) into 2,3-diketo-5-methylthiopentyl-1-phosphate (DK-MTP-1-P). In Aquifex aeolicus (strain VF5), this protein is Methylthioribulose-1-phosphate dehydratase.